A 313-amino-acid polypeptide reads, in one-letter code: Phosphoenolpyruvate phosphomutase (313 aa).

The segment at 1-23 (MNATERPGSDGTGSPESVGSRLK) is disordered. Catalysis depends on D69, which acts as the Nucleophile.

The protein belongs to the isocitrate lyase/PEP mutase superfamily. PEP mutase family.

It catalyses the reaction phosphoenolpyruvate + H(+) = 3-phosphonopyruvate. The protein operates within secondary metabolite biosynthesis; bialaphos biosynthesis. Functionally, formation of a carbon-phosphorus bond by converting phosphoenolpyruvate (PEP) to phosphonopyruvate (P-Pyr). The chain is Phosphoenolpyruvate phosphomutase (ppm) from Streptomyces viridochromogenes (strain DSM 40736 / JCM 4977 / BCRC 1201 / Tue 494).